A 304-amino-acid polypeptide reads, in one-letter code: N-acetylmuramic acid 6-phosphate etherase 1 (304 aa).

Residues 1-10 (MENSHLGSLT) show a composition bias toward polar residues. Residues 1-20 (MENSHLGSLTTERRNERSKR) are disordered. An SIS domain is found at 58–221 (AVGSLKKGGR…STAAMIKMGK (164 aa)). E86 (proton donor) is an active-site residue. Residue E117 is part of the active site.

It belongs to the GCKR-like family. MurNAc-6-P etherase subfamily. As to quaternary structure, homodimer.

The catalysed reaction is N-acetyl-D-muramate 6-phosphate + H2O = N-acetyl-D-glucosamine 6-phosphate + (R)-lactate. It functions in the pathway amino-sugar metabolism; N-acetylmuramate degradation. In terms of biological role, specifically catalyzes the cleavage of the D-lactyl ether substituent of MurNAc 6-phosphate, producing GlcNAc 6-phosphate and D-lactate. In Bacillus licheniformis (strain ATCC 14580 / DSM 13 / JCM 2505 / CCUG 7422 / NBRC 12200 / NCIMB 9375 / NCTC 10341 / NRRL NRS-1264 / Gibson 46), this protein is N-acetylmuramic acid 6-phosphate etherase 1.